Reading from the N-terminus, the 65-residue chain is Muscarinic toxin-like protein 2 (65 aa).

4 disulfides stabilise this stretch: Cys-3/Cys-24, Cys-17/Cys-42, Cys-46/Cys-57, and Cys-58/Cys-63.

This sequence belongs to the three-finger toxin family. Short-chain subfamily. Type C muscarinic toxin sub-subfamily. As to quaternary structure, monomer. As to expression, expressed by the venom gland.

It is found in the secreted. The sequence is that of Muscarinic toxin-like protein 2 from Naja kaouthia (Monocled cobra).